Consider the following 340-residue polypeptide: Glycerol-3-phosphate dehydrogenase [NAD(P)+] (340 aa).

The NADPH site is built by Ser12, Trp13, Lys34, and Lys107. Lys107, Gly138, and Ser140 together coordinate sn-glycerol 3-phosphate. Ala142 serves as a coordination point for NADPH. Residues Lys193, Asp246, Ser256, Arg257, and Asn258 each coordinate sn-glycerol 3-phosphate. Lys193 functions as the Proton acceptor in the catalytic mechanism. Arg257 lines the NADPH pocket. The NADPH site is built by Ile281 and Glu283.

The protein belongs to the NAD-dependent glycerol-3-phosphate dehydrogenase family.

The protein localises to the cytoplasm. It catalyses the reaction sn-glycerol 3-phosphate + NAD(+) = dihydroxyacetone phosphate + NADH + H(+). The catalysed reaction is sn-glycerol 3-phosphate + NADP(+) = dihydroxyacetone phosphate + NADPH + H(+). It participates in membrane lipid metabolism; glycerophospholipid metabolism. In terms of biological role, catalyzes the reduction of the glycolytic intermediate dihydroxyacetone phosphate (DHAP) to sn-glycerol 3-phosphate (G3P), the key precursor for phospholipid synthesis. The polypeptide is Glycerol-3-phosphate dehydrogenase [NAD(P)+] (Enterococcus faecalis (strain ATCC 700802 / V583)).